Reading from the N-terminus, the 676-residue chain is Periplasmic alpha-amylase (676 aa).

The N-terminal stretch at 1-17 (MKLAACFLTLLPGFAVA) is a signal peptide. 2 cysteine pairs are disulfide-bonded: cysteine 57-cysteine 75 and cysteine 121-cysteine 537. Residue asparagine 314 participates in Ca(2+) binding. The active-site Nucleophile is aspartate 460. Histidine 464 lines the Ca(2+) pocket. The active-site Proton donor is the glutamate 503.

Belongs to the glycosyl hydrolase 13 family. In terms of assembly, monomer. The cofactor is Ca(2+).

It localises to the periplasm. The catalysed reaction is Endohydrolysis of (1-&gt;4)-alpha-D-glucosidic linkages in polysaccharides containing three or more (1-&gt;4)-alpha-linked D-glucose units.. Since only maltooligosaccharides up to a chain length of 6 glucose units are actively transported through the cytoplasmic membrane via the membrane-bound complex of three proteins, MalF, MalG, and MalK, longer maltooligosaccharides must first be degraded by the periplasmic alpha-amylase, the MalS protein. This chain is Periplasmic alpha-amylase (malS), found in Escherichia coli (strain K12).